A 419-amino-acid polypeptide reads, in one-letter code: UDP-N-acetylglucosamine 1-carboxyvinyltransferase (419 aa).

22 to 23 (KN) is a binding site for phosphoenolpyruvate. Position 95 (arginine 95) interacts with UDP-N-acetyl-alpha-D-glucosamine. Catalysis depends on cysteine 119, which acts as the Proton donor. Cysteine 119 carries the post-translational modification 2-(S-cysteinyl)pyruvic acid O-phosphothioketal. UDP-N-acetyl-alpha-D-glucosamine-binding positions include 164 to 167 (KVSV), aspartate 308, and isoleucine 330.

Belongs to the EPSP synthase family. MurA subfamily.

The protein localises to the cytoplasm. The catalysed reaction is phosphoenolpyruvate + UDP-N-acetyl-alpha-D-glucosamine = UDP-N-acetyl-3-O-(1-carboxyvinyl)-alpha-D-glucosamine + phosphate. The protein operates within cell wall biogenesis; peptidoglycan biosynthesis. In terms of biological role, cell wall formation. Adds enolpyruvyl to UDP-N-acetylglucosamine. This is UDP-N-acetylglucosamine 1-carboxyvinyltransferase from Rickettsia africae (strain ESF-5).